The following is a 267-amino-acid chain: Tryptophan synthase alpha chain (267 aa).

Active-site proton acceptor residues include Glu49 and Asp60.

This sequence belongs to the TrpA family. As to quaternary structure, tetramer of two alpha and two beta chains.

The catalysed reaction is (1S,2R)-1-C-(indol-3-yl)glycerol 3-phosphate + L-serine = D-glyceraldehyde 3-phosphate + L-tryptophan + H2O. It participates in amino-acid biosynthesis; L-tryptophan biosynthesis; L-tryptophan from chorismate: step 5/5. The alpha subunit is responsible for the aldol cleavage of indoleglycerol phosphate to indole and glyceraldehyde 3-phosphate. This is Tryptophan synthase alpha chain from Pelobacter propionicus (strain DSM 2379 / NBRC 103807 / OttBd1).